Consider the following 308-residue polypeptide: HPr kinase/phosphorylase (308 aa).

Active-site residues include His138 and Lys159. 153–160 provides a ligand contact to ATP; the sequence is GESGLGKS. Ser160 is a Mg(2+) binding site. Asp177 serves as the catalytic Proton acceptor; for phosphorylation activity. Proton donor; for dephosphorylation activity. The interval 201-210 is important for the catalytic mechanism of both phosphorylation and dephosphorylation; it reads LEVRGLGLLD. Glu202 is a Mg(2+) binding site. Arg243 is a catalytic residue. The interval 264-269 is important for the catalytic mechanism of dephosphorylation; it reads QVAAGR.

Belongs to the HPrK/P family. In terms of assembly, homohexamer. It depends on Mg(2+) as a cofactor.

The catalysed reaction is [HPr protein]-L-serine + ATP = [HPr protein]-O-phospho-L-serine + ADP + H(+). It carries out the reaction [HPr protein]-O-phospho-L-serine + phosphate + H(+) = [HPr protein]-L-serine + diphosphate. Functionally, catalyzes the ATP- as well as the pyrophosphate-dependent phosphorylation of a specific serine residue in HPr, a phosphocarrier protein of the phosphoenolpyruvate-dependent sugar phosphotransferase system (PTS). HprK/P also catalyzes the pyrophosphate-producing, inorganic phosphate-dependent dephosphorylation (phosphorolysis) of seryl-phosphorylated HPr (P-Ser-HPr). This chain is HPr kinase/phosphorylase, found in Bordetella petrii (strain ATCC BAA-461 / DSM 12804 / CCUG 43448).